The primary structure comprises 247 residues: tRNA uridine(34) hydroxylase (247 aa).

The Rhodanese domain occupies 124–218; it reads TKQDVIVIDT…YLEDTQNKNN (95 aa). Catalysis depends on Cys178, which acts as the Cysteine persulfide intermediate.

The protein belongs to the TrhO family.

It catalyses the reaction uridine(34) in tRNA + AH2 + O2 = 5-hydroxyuridine(34) in tRNA + A + H2O. In terms of biological role, catalyzes oxygen-dependent 5-hydroxyuridine (ho5U) modification at position 34 in tRNAs. This Rickettsia rickettsii (strain Iowa) protein is tRNA uridine(34) hydroxylase.